Consider the following 604-residue polypeptide: Glucose-methanol-choline family oxidoreductase mfmG (604 aa).

The signal sequence occupies residues Met-1–Ala-24. Asn-32 carries an N-linked (GlcNAc...) asparagine glycan. FAD-binding positions include Thr-44–Ala-45 and Glu-65–Ala-66. Residues Asn-76 and Asn-97 are each glycosylated (N-linked (GlcNAc...) asparagine). Asn-126–Ala-129 is a binding site for FAD. N-linked (GlcNAc...) asparagine glycans are attached at residues Asn-260, Asn-265, Asn-401, and Asn-460. The Proton acceptor role is filled by His-538. Residues Ala-572 and Pro-584–Gln-585 contribute to the FAD site.

The protein belongs to the GMC oxidoreductase family. As to quaternary structure, homodimer. FAD serves as cofactor.

In terms of biological role, oxidoreductase; part of the gene cluster that mediates the biosynthesis of the phthalide-terpenoid hybrid 11'-O-desmethylfendlerol. MfmG seems not to be involved directly in the biosynthesis of 11'-O-desmethylfendlerol and its role has still to be determined. The biosynthesis of 11'-O-desmethylfendlerol begins with the NR-PKS mfmB that forms 3,5-dimethylorsellinic acid (DMOA), which is then transformed into the phthalide 5,7-dihydroxy-4-(hydroxymethyl)-6-methylphthalide by the cytochrome P450 monooxygenase mfmA and the hydrolase mfmC. Subsequently, the methyltransferase mfmE catalyzes 7-O-methylation to yield 5-hydroxy-4-(hydroxymethyl)-7-methoxy-6-methylphthalide, which undergoes C-3 hydroxylation by the cytochrome P450 monooxygenase mfmF. The resultant cyclopolic acid (2,5-dihydroxy-4-(hydroxymethyl)-7-methoxy-6-methylphthalide) is then farnesylated by the DMATS-type prenyltransferase mfmD to afford 5-O-farnesylcyclopolic acid. Finally, the Pyr4-family terpene cyclase mfmH cyclizes the farnesyl moiety of 5-O-farnesylcyclopolic acid into a drimane-like structure, thus completing the biosynthesis of 11'-O-desmethylfendlerol. This is Glucose-methanol-choline family oxidoreductase mfmG from Annulohypoxylon moriforme (Filamentous fungus).